The primary structure comprises 322 residues: Tetraacyldisaccharide 4'-kinase (322 aa).

54-61 is an ATP binding site; it reads SVGGTGKT.

The protein belongs to the LpxK family.

It carries out the reaction a lipid A disaccharide + ATP = a lipid IVA + ADP + H(+). The protein operates within glycolipid biosynthesis; lipid IV(A) biosynthesis; lipid IV(A) from (3R)-3-hydroxytetradecanoyl-[acyl-carrier-protein] and UDP-N-acetyl-alpha-D-glucosamine: step 6/6. Functionally, transfers the gamma-phosphate of ATP to the 4'-position of a tetraacyldisaccharide 1-phosphate intermediate (termed DS-1-P) to form tetraacyldisaccharide 1,4'-bis-phosphate (lipid IVA). This chain is Tetraacyldisaccharide 4'-kinase, found in Francisella tularensis subsp. tularensis (strain FSC 198).